Here is a 364-residue protein sequence, read N- to C-terminus: Uroporphyrinogen decarboxylase (364 aa).

Residues 28-32 (RQAGR), Phe47, Asp78, Tyr158, Thr213, and His334 contribute to the substrate site.

The protein belongs to the uroporphyrinogen decarboxylase family. Homodimer.

The protein resides in the cytoplasm. It catalyses the reaction uroporphyrinogen III + 4 H(+) = coproporphyrinogen III + 4 CO2. It functions in the pathway porphyrin-containing compound metabolism; protoporphyrin-IX biosynthesis; coproporphyrinogen-III from 5-aminolevulinate: step 4/4. In terms of biological role, catalyzes the decarboxylation of four acetate groups of uroporphyrinogen-III to yield coproporphyrinogen-III. The polypeptide is Uroporphyrinogen decarboxylase (Ralstonia nicotianae (strain ATCC BAA-1114 / GMI1000) (Ralstonia solanacearum)).